The following is a 462-amino-acid chain: Fumarate hydratase class II (462 aa).

Residues 98–100 (SGT), Arg-126, 129–132 (HPND), 139–141 (SSN), and Thr-187 each bind substrate. The segment at 120–141 (GTRGKGRKVHPNDHVNKGQSSN) is disordered. His-188 functions as the Proton donor/acceptor in the catalytic mechanism. Ser-318 is a catalytic residue. Residues Ser-319 and 324–326 (KVN) each bind substrate.

It belongs to the class-II fumarase/aspartase family. Fumarase subfamily. In terms of assembly, homotetramer.

The protein resides in the cytoplasm. The catalysed reaction is (S)-malate = fumarate + H2O. It functions in the pathway carbohydrate metabolism; tricarboxylic acid cycle; (S)-malate from fumarate: step 1/1. Involved in the TCA cycle. Catalyzes the stereospecific interconversion of fumarate to L-malate. The protein is Fumarate hydratase class II of Nitrosomonas europaea (strain ATCC 19718 / CIP 103999 / KCTC 2705 / NBRC 14298).